Here is a 329-residue protein sequence, read N- to C-terminus: DNA-directed RNA polymerase subunit alpha (329 aa).

The tract at residues 1-231 is alpha N-terminal domain (alpha-NTD); it reads MQTTLLKPKT…EQLAVFAQLE (231 aa). An alpha C-terminal domain (alpha-CTD) region spans residues 249-329; that stretch reads FDPILLRPVD…SWPPAGLDKR (81 aa).

This sequence belongs to the RNA polymerase alpha chain family. Homodimer. The RNAP catalytic core consists of 2 alpha, 1 beta, 1 beta' and 1 omega subunit. When a sigma factor is associated with the core the holoenzyme is formed, which can initiate transcription.

The enzyme catalyses RNA(n) + a ribonucleoside 5'-triphosphate = RNA(n+1) + diphosphate. DNA-dependent RNA polymerase catalyzes the transcription of DNA into RNA using the four ribonucleoside triphosphates as substrates. This chain is DNA-directed RNA polymerase subunit alpha, found in Variovorax paradoxus (strain S110).